A 76-amino-acid chain; its full sequence is U7-lycotoxin-Ls1c (76 aa).

The N-terminal stretch at 1 to 22 is a signal peptide; sequence MKLIIFTGLALFLLVSLIDVEA. A propeptide spanning residues 23–26 is cleaved from the precursor; sequence QNEG.

Belongs to the neurotoxin 19 (CSTX) family. 07 (U7-Lctx) subfamily. Post-translationally, contains 4 disulfide bonds. As to expression, expressed by the venom gland.

Its subcellular location is the secreted. This is U7-lycotoxin-Ls1c from Lycosa singoriensis (Wolf spider).